The sequence spans 85 residues: Cell division topological specificity factor (85 aa).

It belongs to the MinE family.

Its function is as follows. Prevents the cell division inhibition by proteins MinC and MinD at internal division sites while permitting inhibition at polar sites. This ensures cell division at the proper site by restricting the formation of a division septum at the midpoint of the long axis of the cell. This is Cell division topological specificity factor from Shewanella sp. (strain ANA-3).